We begin with the raw amino-acid sequence, 127 residues long: Glycine cleavage system H protein (127 aa).

The 83-residue stretch at 22 to 104 (KVRIGITHFA…YEKAWMIVVE (83 aa)) folds into the Lipoyl-binding domain. Lys63 carries the N6-lipoyllysine modification.

The protein belongs to the GcvH family. The glycine cleavage system is composed of four proteins: P, T, L and H. (R)-lipoate serves as cofactor.

Functionally, the glycine cleavage system catalyzes the degradation of glycine. The H protein shuttles the methylamine group of glycine from the P protein to the T protein. Its function is as follows. Is also involved in protein lipoylation via its role as an octanoyl/lipoyl carrier protein intermediate. This is Glycine cleavage system H protein from Bacillus pumilus (strain SAFR-032).